A 1141-amino-acid polypeptide reads, in one-letter code: Serine-aspartate repeat-containing protein E (1141 aa).

The N-terminal stretch at M1–A52 is a signal peptide. A YSIRK-G/S signaling motif motif is present at residues F23–S34. Positions A53–K601 are ligand binding A region. Residues E54–E225 are disordered. Residues A61 to V75 show a composition bias toward basic and acidic residues. A compositionally biased stretch (low complexity) spans E77 to N90. A compositionally biased stretch (basic and acidic residues) spans I92 to T109. Residues K110 to T126 are compositionally biased toward low complexity. The span at N130 to T145 shows a compositional bias: basic and acidic residues. Residues P158–T207 show a composition bias toward polar residues. Residues S216–E225 are compositionally biased toward basic and acidic residues. CNA-B domains follow at residues L602 to P714, K715 to P824, and K825 to T935. The interval V899–A1117 is disordered. Acidic residues-rich tracts occupy residues T903 to E913 and Y930 to S1080. The LPXTG sorting signal signature appears at L1104–G1108. T1107 is modified (pentaglycyl murein peptidoglycan amidated threonine). A propeptide spans G1108–K1141 (removed by sortase).

Belongs to the serine-aspartate repeat-containing protein (SDr) family. As to quaternary structure, interacts with host complement factor H/CFAH (via C-terminus). Interacts with host complement regulator C4BPA.

It is found in the secreted. It localises to the cell wall. Its function is as follows. Cell surface-associated calcium-binding protein which plays an important role in adhesion and pathogenesis. Contributes to the resistance to killing by innate immune components in blood and thus attenuates bacterial clearance by interacting with host complement factor H/CFAH and modulating its activity. Also inhibits bacterial opsonization and killing by interacting with host complement regulator C4BPA and thus inhibiting classical complement pathway activation. In Staphylococcus aureus (strain MSSA476), this protein is Serine-aspartate repeat-containing protein E (sdrE).